The chain runs to 608 residues: 1-deoxy-D-xylulose-5-phosphate synthase (608 aa).

Thiamine diphosphate is bound by residues His80 and 121-123 (GHS). Residue Asp152 participates in Mg(2+) binding. Thiamine diphosphate contacts are provided by residues 153-154 (GA), Asn181, Tyr282, and Glu357. A Mg(2+)-binding site is contributed by Asn181.

It belongs to the transketolase family. DXPS subfamily. As to quaternary structure, homodimer. It depends on Mg(2+) as a cofactor. Thiamine diphosphate serves as cofactor.

The enzyme catalyses D-glyceraldehyde 3-phosphate + pyruvate + H(+) = 1-deoxy-D-xylulose 5-phosphate + CO2. The protein operates within metabolic intermediate biosynthesis; 1-deoxy-D-xylulose 5-phosphate biosynthesis; 1-deoxy-D-xylulose 5-phosphate from D-glyceraldehyde 3-phosphate and pyruvate: step 1/1. Its function is as follows. Catalyzes the acyloin condensation reaction between C atoms 2 and 3 of pyruvate and glyceraldehyde 3-phosphate to yield 1-deoxy-D-xylulose-5-phosphate (DXP). The chain is 1-deoxy-D-xylulose-5-phosphate synthase from Buchnera aphidicola subsp. Acyrthosiphon pisum (strain 5A).